The sequence spans 622 residues: Probable potassium transport system protein Kup 2 (622 aa).

12 helical membrane passes run 9–29 (LSGV…TSPL), 46–66 (PASI…VVSV), 99–119 (TPLL…EVVI), 137–157 (PSLD…LFAI), 169–189 (FAPI…NSIF), 213–233 (ASFF…ALYA), 247–267 (WFMV…ALLL), 285–305 (ALLP…QAVI), 337–357 (IYIP…IMSF), 363–383 (LAAA…ILSC), 396–416 (LVAA…AANL), and 419–439 (IFSG…VMTS).

It belongs to the HAK/KUP transporter (TC 2.A.72) family.

It localises to the cell inner membrane. It catalyses the reaction K(+)(in) + H(+)(in) = K(+)(out) + H(+)(out). In terms of biological role, transport of potassium into the cell. Likely operates as a K(+):H(+) symporter. The protein is Probable potassium transport system protein Kup 2 of Aeromonas hydrophila subsp. hydrophila (strain ATCC 7966 / DSM 30187 / BCRC 13018 / CCUG 14551 / JCM 1027 / KCTC 2358 / NCIMB 9240 / NCTC 8049).